The primary structure comprises 595 residues: MTTSDPNPKPIVEDAQPEQITATEELAGLLENPTNLEGKLADAEEEIILEGEDTQASLNWSVIVPALVIVLATVVWGIGFKDSFTNFASSALSAVVDNLGWAFILFGTVFVFFIVVIAASKFGTIRLGRIDEAPEFRTVSWISMMFAAGMGIGLMFYGTTEPLTFYRNGVPGHDEHNVGVAMSTTMFHWTLHPWAIYAIVGLAIAYSTFRVGRKQLLSSAFVPLIGEKGAEGWLGKLIDILAIIATVFGTACSLGLGALQIGAGLSAANIIEDPSDWTIVGIVSVLTLAFIFSAISGVGKGIQYLSNANMVLAALLAIFVFVVGPTVSILNLLPGSIGNYLSNFFQMAGRTAMSADGTAGEWLGSWTIFYWAWWISWSPFVGMFLARISRGRSIREFILGVLLVPAGVSTVWFSIFGGTAIVFEQNGESIWGDGAAEEQLFGLLHALPGGQIMGIIAMILLGTFFITSADSASTVMGTMSQHGQLEANKWVTAAWGVATAAIGLTLLLSGGDNALSNLQNVTIVAATPFLFVVIGLMFALVKDLSNDVIYLEYREQQRFNARLARERRVHNEHRKRELAAKRRRERKASGAGKRR.

Topologically, residues 1–59 (MTTSDPNPKPIVEDAQPEQITATEELAGLLENPTNLEGKLADAEEEIILEGEDTQASLN) are cytoplasmic. A helical transmembrane segment spans residues 60 to 80 (WSVIVPALVIVLATVVWGIGF). Topologically, residues 81–98 (KDSFTNFASSALSAVVDN) are periplasmic. The chain crosses the membrane as a helical span at residues 99–119 (LGWAFILFGTVFVFFIVVIAA). Residues 120–137 (SKFGTIRLGRIDEAPEFR) are Cytoplasmic-facing. A helical membrane pass occupies residues 138 to 158 (TVSWISMMFAAGMGIGLMFYG). The Na(+) site is built by alanine 147, alanine 148, and methionine 150. Residue 152–153 (IG) coordinates glycine betaine. The Periplasmic portion of the chain corresponds to 159-185 (TTEPLTFYRNGVPGHDEHNVGVAMSTT). A helical transmembrane segment spans residues 186 to 206 (MFHWTLHPWAIYAIVGLAIAY). The Cytoplasmic segment spans residues 207–236 (STFRVGRKQLLSSAFVPLIGEKGAEGWLGK). Residues 237–257 (LIDILAIIATVFGTACSLGLG) form a helical membrane-spanning segment. Serine 253 contributes to the glycine betaine binding site. At 258–276 (ALQIGAGLSAANIIEDPSD) the chain is on the periplasmic side. Residues 277-296 (WTIVGIVSVLTLAFIFSAIS) traverse the membrane as a helical segment. Over 297–299 (GVG) the chain is Cytoplasmic. The chain crosses the membrane as a helical span at residues 300–323 (KGIQYLSNANMVLAALLAIFVFVV). Residues serine 306 and methionine 310 each coordinate Na(+). At 324-365 (GPTVSILNLLPGSIGNYLSNFFQMAGRTAMSADGTAGEWLGS) the chain is on the periplasmic side. A helical transmembrane segment spans residues 366 to 386 (WTIFYWAWWISWSPFVGMFLA). 373-377 (WWISW) is a binding site for glycine betaine. Over 387-396 (RISRGRSIRE) the chain is Cytoplasmic. Residues 397-417 (FILGVLLVPAGVSTVWFSIFG) form a helical membrane-spanning segment. At 418–451 (GTAIVFEQNGESIWGDGAAEEQLFGLLHALPGGQ) the chain is on the periplasmic side. The chain crosses the membrane as a helical span at residues 452–476 (IMGIIAMILLGTFFITSADSASTVM). At 477-489 (GTMSQHGQLEANK) the chain is on the cytoplasmic side. The helical transmembrane segment at 490-510 (WVTAAWGVATAAIGLTLLLSG) threads the bilayer. The Periplasmic segment spans residues 511–520 (GDNALSNLQN). The chain crosses the membrane as a helical span at residues 521 to 541 (VTIVAATPFLFVVIGLMFALV). Residues 542-595 (KDLSNDVIYLEYREQQRFNARLARERRVHNEHRKRELAAKRRRERKASGAGKRR) are Cytoplasmic-facing. The disordered stretch occupies residues 570 to 595 (HNEHRKRELAAKRRRERKASGAGKRR). A compositionally biased stretch (basic residues) spans 581 to 595 (KRRRERKASGAGKRR).

Belongs to the BCCT transporter (TC 2.A.15) family. In terms of assembly, homotrimer. The monomer can accumulate glycine betaine, but trimerization is required to properly respond to osmotic stress.

It localises to the cell inner membrane. Its activity is regulated as follows. Uptake is activated by hyperosmotic stress. Osmoresponsive activation is triggered by a change in the internal K(+) concentration. In addition, shows a pronounced chill stimulation, at temperatures around 10 degrees Celsius. Chill activation may be influenced by the membrane lipid composition. Uptake is completely abolished by the uncoupler CCCP, and to a different extent by the ionophores valinomycin and nigericin. Its function is as follows. Involved in response to osmotic stress. High-affinity glycine betaine-specific uptake system, which couples the uptake of glycine betaine to the symport of two Na(+) ions. Transport is driven both by the Na(+) gradient and by the electrical potential. In addition, functions both as an osmosensor and as an osmoregulator that transduces signal to the catalytic part of the carrier protein, which adapts its activity to the extent of osmotic stress. This Corynebacterium glutamicum (strain ATCC 13032 / DSM 20300 / JCM 1318 / BCRC 11384 / CCUG 27702 / LMG 3730 / NBRC 12168 / NCIMB 10025 / NRRL B-2784 / 534) protein is Glycine betaine transporter BetP.